The primary structure comprises 179 residues: O-acetyl-ADP-ribose deacetylase (179 aa).

Residues 1 to 175 (MTSRLQVIQG…LYARLLTQQG (175 aa)) enclose the Macro domain. Substrate is bound by residues 11–12 (DI), Asn-25, 33–35 (GVD), and 122–126 (STGVY). Asp-35 acts as the Proton acceptor in catalysis.

It belongs to the MacroD-type family. YmdB subfamily. As to quaternary structure, homodimer. Interacts with RNase III.

It catalyses the reaction 3''-O-acetyl-ADP-D-ribose + H2O = ADP-D-ribose + acetate + H(+). It carries out the reaction 2''-O-acetyl-ADP-D-ribose + H2O = ADP-D-ribose + acetate + H(+). Deacetylates O-acetyl-ADP ribose to yield ADP-ribose and free acetate. Down-regulates ribonuclease 3 (RNase III) activity. Acts by interacting directly with the region of the ribonuclease that is required for dimerization/activation. In Salmonella newport (strain SL254), this protein is O-acetyl-ADP-ribose deacetylase.